A 322-amino-acid polypeptide reads, in one-letter code: uncharacterized protein (322 aa).

Helical transmembrane passes span 24–44, 68–88, 100–120, and 125–145; these read LLHL…IQIT, LFFE…LIFI, IVTS…TPTF, and VQLI…MPSL.

The protein localises to the cell membrane. This is an uncharacterized protein from Bacillus subtilis (strain 168).